We begin with the raw amino-acid sequence, 128 residues long: Translation initiation factor 5A (128 aa).

K35 is modified (hypusine).

It belongs to the eIF-5A family.

It is found in the cytoplasm. Functionally, functions by promoting the formation of the first peptide bond. This chain is Translation initiation factor 5A (eif5a), found in Archaeoglobus fulgidus (strain ATCC 49558 / DSM 4304 / JCM 9628 / NBRC 100126 / VC-16).